Here is a 113-residue protein sequence, read N- to C-terminus: U11-theraphotoxin-Hhn1a (113 aa).

Residues 1–21 (MNTVRVTFLLVFVLAVSLGQA) form the signal peptide. Residues 22 to 74 (DKDENRMEMQEKTEQGKGYLDFAENLLPQKLEELEAKLLEEDSEESRNSRQKR) constitute a propeptide that is removed on maturation. Over residues 59 to 69 (LLEEDSEESRN) the composition is skewed to basic and acidic residues. Residues 59-83 (LLEEDSEESRNSRQKRCIGEGVPCD) form a disordered region. Intrachain disulfides connect Cys75–Cys90, Cys82–Cys95, and Cys89–Cys110.

Belongs to the neurotoxin 14 (magi-1) family. 01 (HNTX-16) subfamily. In terms of tissue distribution, expressed by the venom gland.

The protein localises to the secreted. In terms of biological role, probable ion channel inhibitor. The sequence is that of U11-theraphotoxin-Hhn1a from Cyriopagopus hainanus (Chinese bird spider).